The following is a 118-amino-acid chain: LYR motif containing protein 1 (118 aa).

Residues 91–118 (TQKGRKLRAQQRLRKQAKPVYLQSQDET) are disordered. The segment covering 93 to 107 (KGRKLRAQQRLRKQA) has biased composition (basic residues).

Belongs to the complex I LYR family.

This chain is LYR motif containing protein 1 (lyrm1), found in Danio rerio (Zebrafish).